We begin with the raw amino-acid sequence, 555 residues long: Solute carrier family 2, facilitated glucose transporter member 10 (555 aa).

The Cytoplasmic portion of the chain corresponds to 1 to 15 (MGLSSPTLILAATVS). Residues 16 to 36 (LLGGIVFGYELGIISGALLVL) form a helical membrane-spanning segment. Residues 37–48 (KTVYQLTCFEQE) lie on the Extracellular side of the membrane. A helical transmembrane segment spans residues 49–69 (ALVSAVLFGALLASLIGGIII). Over 70–82 (DRWGRRTAILASN) the chain is Cytoplasmic. The chain crosses the membrane as a helical span at residues 83 to 103 (LVVLAGSIILIATSTFWWLIV). The Extracellular portion of the chain corresponds to 104-105 (GR). Residues 106 to 126 (VTIGFAISISSMACCIYVSEI) form a helical membrane-spanning segment. Residues 127 to 132 (VRPHQR) lie on the Cytoplasmic side of the membrane. A helical membrane pass occupies residues 133-153 (GMLVSLYETGITVGILISYAM). At 154–165 (NYFLSGVNESWK) the chain is on the extracellular side. An N-linked (GlcNAc...) asparagine glycan is attached at asparagine 161. A helical transmembrane segment spans residues 166–186 (YMFGLAIVPAAFQFISILFLP). Residues 187–240 (SKPHKLNFWEQDTDDGFIELEETGEAGEFKPDTYDRQYTFLDLFRSKDNMRTRT) are Cytoplasmic-facing. The helical transmembrane segment at 241-261 (LLGLGLVLFQQFTGQPNVLYY) threads the bilayer. 250 to 251 (QQ) contacts D-glucose. Residues 262 to 277 (ASTIFQSVGFQSNSSA) lie on the Extracellular side of the membrane. N-linked (GlcNAc...) asparagine glycosylation is present at asparagine 274. The helical transmembrane segment at 278–298 (VLASVGLGVVKVASTLIAICF) threads the bilayer. At 299 to 305 (ADKAGRR) the chain is on the cytoplasmic side. A helical membrane pass occupies residues 306–326 (ILLLAGCIVMTIAITGIGIVS). Topologically, residues 327-415 (FTVKMDSHRD…ASPELPSNYT (89 aa)) are extracellular. 4 N-linked (GlcNAc...) asparagine glycosylation sites follow: asparagine 344, asparagine 351, asparagine 400, and asparagine 413. A helical transmembrane segment spans residues 416 to 436 (ILNWITLLSMMAFVSAFSIGF). Over 437–464 (GPMTWIVLSEIYPADIRGRAFAFCNSFN) the chain is Cytoplasmic. Tryptophan 441 contributes to the D-glucose binding site. A helical transmembrane segment spans residues 465–483 (WAANLLITLTFLDVIASIG). The Extracellular portion of the chain corresponds to 484–485 (LS). A helical transmembrane segment spans residues 486–506 (WTFLLYGVVGLLAIAFIYFFI). Over 507–555 (PETKGQSLEEIDKQFSTKRILQKRETSKGVGKRPSSGPPYQRIGKASPS) the chain is Cytoplasmic. The tract at residues 528-555 (QKRETSKGVGKRPSSGPPYQRIGKASPS) is disordered.

The protein belongs to the major facilitator superfamily. Sugar transporter (TC 2.A.1.1) family. Glucose transporter subfamily.

The protein localises to the endomembrane system. Its subcellular location is the cytoplasm. It is found in the perinuclear region. The enzyme catalyses D-glucose(out) = D-glucose(in). In terms of biological role, facilitative glucose transporter required for the development of the cardiovascular system. In Xenopus tropicalis (Western clawed frog), this protein is Solute carrier family 2, facilitated glucose transporter member 10.